A 252-amino-acid chain; its full sequence is Curing of [URE3] protein 1 (252 aa).

The protein localises to the nucleus. Its function is as follows. Involved in the curing of prion [URE3]. Nuclear localization of this protein may suggest a role in transcription regulation, so it might exert an effect on [URE3] through known prion-curing chaperones or BTN2. The polypeptide is Curing of [URE3] protein 1 (CUR1) (Saccharomyces cerevisiae (strain ATCC 204508 / S288c) (Baker's yeast)).